The following is a 211-amino-acid chain: Redox-sensing transcriptional repressor Rex (211 aa).

A DNA-binding region (H-T-H motif) is located at residues 17-56 (KYHRYLEELMKNEVDRISSKELGEKIGFTASQIRQDLNCF). NAD(+) is bound at residue 91-96 (GAGNIG).

It belongs to the transcriptional regulatory Rex family. Homodimer.

The protein resides in the cytoplasm. In terms of biological role, modulates transcription in response to changes in cellular NADH/NAD(+) redox state. This is Redox-sensing transcriptional repressor Rex from Clostridium beijerinckii (strain ATCC 51743 / NCIMB 8052) (Clostridium acetobutylicum).